A 334-amino-acid chain; its full sequence is Ketol-acid reductoisomerase (NADP(+)) (334 aa).

The region spanning 1–181 (MTTVYYDQDV…GATRAGVIET (181 aa)) is the KARI N-terminal Rossmann domain. NADP(+)-binding positions include 25–28 (YGSQ), arginine 48, serine 52, and 82–85 (DEIQ). Histidine 107 is an active-site residue. NADP(+) is bound at residue glycine 133. Positions 182-327 (TFKEETETDL…RELREMMPFI (146 aa)) constitute a KARI C-terminal knotted domain. Mg(2+) contacts are provided by aspartate 190, glutamate 194, glutamate 226, and glutamate 230. Position 251 (serine 251) interacts with substrate.

It belongs to the ketol-acid reductoisomerase family. Requires Mg(2+) as cofactor.

The enzyme catalyses (2R)-2,3-dihydroxy-3-methylbutanoate + NADP(+) = (2S)-2-acetolactate + NADPH + H(+). It carries out the reaction (2R,3R)-2,3-dihydroxy-3-methylpentanoate + NADP(+) = (S)-2-ethyl-2-hydroxy-3-oxobutanoate + NADPH + H(+). It functions in the pathway amino-acid biosynthesis; L-isoleucine biosynthesis; L-isoleucine from 2-oxobutanoate: step 2/4. It participates in amino-acid biosynthesis; L-valine biosynthesis; L-valine from pyruvate: step 2/4. Involved in the biosynthesis of branched-chain amino acids (BCAA). Catalyzes an alkyl-migration followed by a ketol-acid reduction of (S)-2-acetolactate (S2AL) to yield (R)-2,3-dihydroxy-isovalerate. In the isomerase reaction, S2AL is rearranged via a Mg-dependent methyl migration to produce 3-hydroxy-3-methyl-2-ketobutyrate (HMKB). In the reductase reaction, this 2-ketoacid undergoes a metal-dependent reduction by NADPH to yield (R)-2,3-dihydroxy-isovalerate. This Staphylococcus aureus (strain Mu3 / ATCC 700698) protein is Ketol-acid reductoisomerase (NADP(+)).